The chain runs to 385 residues: Meiotic recombination protein SPO11-2 (385 aa).

The region spanning 24–169 (LPPAEVRARI…LGIMASSRGA (146 aa)) is the Topo IIA-type catalytic domain. The active-site O-(5'-phospho-DNA)-tyrosine intermediate is the Y126. The Mg(2+) site is built by E219 and D272.

The protein belongs to the TOP6A family. As to quaternary structure, interacts with TOP6B. Requires Mg(2+) as cofactor.

It is found in the nucleus. It catalyses the reaction ATP-dependent breakage, passage and rejoining of double-stranded DNA.. In terms of biological role, required for meiotic recombination. Mediates DNA cleavage that forms the double-strand breaks (DSB) that initiate meiotic recombination. This chain is Meiotic recombination protein SPO11-2 (SPO11-2), found in Oryza sativa subsp. japonica (Rice).